Here is a 93-residue protein sequence, read N- to C-terminus: Aspartyl/glutamyl-tRNA(Asn/Gln) amidotransferase subunit C (93 aa).

It belongs to the GatC family. Heterotrimer of A, B and C subunits.

It carries out the reaction L-glutamyl-tRNA(Gln) + L-glutamine + ATP + H2O = L-glutaminyl-tRNA(Gln) + L-glutamate + ADP + phosphate + H(+). The catalysed reaction is L-aspartyl-tRNA(Asn) + L-glutamine + ATP + H2O = L-asparaginyl-tRNA(Asn) + L-glutamate + ADP + phosphate + 2 H(+). Functionally, allows the formation of correctly charged Asn-tRNA(Asn) or Gln-tRNA(Gln) through the transamidation of misacylated Asp-tRNA(Asn) or Glu-tRNA(Gln) in organisms which lack either or both of asparaginyl-tRNA or glutaminyl-tRNA synthetases. The reaction takes place in the presence of glutamine and ATP through an activated phospho-Asp-tRNA(Asn) or phospho-Glu-tRNA(Gln). The polypeptide is Aspartyl/glutamyl-tRNA(Asn/Gln) amidotransferase subunit C (Methanocella arvoryzae (strain DSM 22066 / NBRC 105507 / MRE50)).